The chain runs to 452 residues: Matrilin-3 (452 aa).

The N-terminal stretch at 1-24 (MRRALGTLGCCLALLLPLLPAARG) is a signal peptide. A VWFA domain is found at 54-229 (DLVFIIDSSR…GVIEKLTSKF (176 aa)). 4 EGF-like domains span residues 235-275 (AANT…RTCS), 276-316 (AVDV…KTCS), 317-357 (AMDV…KTCS), and 358-398 (AVDV…KTCS). 12 disulfide bridges follow: Cys239–Cys250, Cys246–Cys259, Cys261–Cys274, Cys280–Cys291, Cys287–Cys300, Cys302–Cys315, Cys321–Cys332, Cys328–Cys341, Cys343–Cys356, Cys362–Cys373, Cys369–Cys382, and Cys384–Cys397. An N-linked (GlcNAc...) asparagine glycan is attached at Asn295. A coiled-coil region spans residues 419–451 (ALQDSVTSRLEALSTKLDEVSQKLQAYQDRQQV).

In terms of assembly, can form homooligomers (monomers, dimers, trimers and tetramers) and heterooligomers with matrilin-1. In terms of tissue distribution, expression is restricted to cartilaginous tissues.

It localises to the secreted. Functionally, major component of the extracellular matrix of cartilage and may play a role in the formation of extracellular filamentous networks. The sequence is that of Matrilin-3 (MATN3) from Gallus gallus (Chicken).